Here is a 114-residue protein sequence, read N- to C-terminus: Hydrogenase maturation factor HypA (114 aa).

Residue His2 coordinates Ni(2+). Residues Cys73, Cys76, Cys89, and Cys92 each contribute to the Zn(2+) site.

It belongs to the HypA/HybF family.

Functionally, involved in the maturation of [NiFe] hydrogenases. Required for nickel insertion into the metal center of the hydrogenase. This is Hydrogenase maturation factor HypA from Caldanaerobacter subterraneus subsp. tengcongensis (strain DSM 15242 / JCM 11007 / NBRC 100824 / MB4) (Thermoanaerobacter tengcongensis).